Here is a 1089-residue protein sequence, read N- to C-terminus: Protein phosphatase 1 regulatory subunit 3A (1089 aa).

Residues 32–57 (KATFKPGFSPQPSRRGSGSSEDMYLD) are disordered. The segment covering 37-51 (PGFSPQPSRRGSGSS) has biased composition (low complexity). Residues S40 and S44 each carry the phosphoserine; by GSK3 modification. Phosphoserine is present on residues S48 and S51. Position 58 is a phosphothreonine (T58). The PP1-binding motif motif lies at 64–67 (RRVS). The residue at position 67 (S67) is a Phosphoserine; by PKA. Residues 123–231 (EQLQVQKAVL…NNNGTNYILV (109 aa)) enclose the CBM21 domain. Disordered stretches follow at residues 385–420 (FYHS…GDTS), 479–501 (HGDS…KVDN), and 566–649 (PCPS…SDIA). Polar residues predominate over residues 581–600 (SGSNLEPGTSDLSSPRNFSP). The span at 602–614 (TDDHLFQADRENS) shows a compositional bias: basic and acidic residues. Over residues 615–625 (DSSNPENQNMN) the composition is skewed to polar residues. S821 carries the phosphoserine modification. The disordered stretch occupies residues 949–968 (IMKSGSGGERGGGPILQQKE). A compositionally biased stretch (gly residues) spans 953-962 (GSGGERGGGP). Residues 1047 to 1067 (LLFLIFLATVYYYDLMIGLAF) form a helical membrane-spanning segment.

As to quaternary structure, interacts with PPP1CC catalytic subunit of PP1, and associates with glycogen. Post-translationally, phosphorylation at Ser-48 by ISPK stimulates the dephosphorylation of glycogen synthase and phosphorylase kinase. In terms of tissue distribution, skeletal muscle and heart.

The protein localises to the membrane. Its function is as follows. Seems to act as a glycogen-targeting subunit for PP1. PP1 is essential for cell division, and participates in the regulation of glycogen metabolism, muscle contractility and protein synthesis. Plays an important role in glycogen synthesis but is not essential for insulin activation of glycogen synthase. This chain is Protein phosphatase 1 regulatory subunit 3A (Ppp1r3a), found in Mus musculus (Mouse).